The chain runs to 905 residues: Protein translocase subunit SecA (905 aa).

ATP-binding positions include glutamine 87, 105-109, and aspartate 509; that span reads GEGKT. Cysteine 890, cysteine 892, cysteine 901, and histidine 902 together coordinate Zn(2+).

Belongs to the SecA family. As to quaternary structure, monomer and homodimer. Part of the essential Sec protein translocation apparatus which comprises SecA, SecYEG and auxiliary proteins SecDF-YajC and YidC. Zn(2+) serves as cofactor.

The protein localises to the cell inner membrane. The protein resides in the cytoplasm. The enzyme catalyses ATP + H2O + cellular proteinSide 1 = ADP + phosphate + cellular proteinSide 2.. Part of the Sec protein translocase complex. Interacts with the SecYEG preprotein conducting channel. Has a central role in coupling the hydrolysis of ATP to the transfer of proteins into and across the cell membrane, serving both as a receptor for the preprotein-SecB complex and as an ATP-driven molecular motor driving the stepwise translocation of polypeptide chains across the membrane. The protein is Protein translocase subunit SecA of Acinetobacter baylyi (strain ATCC 33305 / BD413 / ADP1).